Reading from the N-terminus, the 489-residue chain is Glycogen synthase (489 aa).

Position 20 (Arg-20) interacts with ADP-alpha-D-glucose.

This sequence belongs to the glycosyltransferase 1 family. Bacterial/plant glycogen synthase subfamily.

It carries out the reaction [(1-&gt;4)-alpha-D-glucosyl](n) + ADP-alpha-D-glucose = [(1-&gt;4)-alpha-D-glucosyl](n+1) + ADP + H(+). Its pathway is glycan biosynthesis; glycogen biosynthesis. In terms of biological role, synthesizes alpha-1,4-glucan chains using ADP-glucose. The sequence is that of Glycogen synthase from Pelodictyon phaeoclathratiforme (strain DSM 5477 / BU-1).